Reading from the N-terminus, the 276-residue chain is Proteasome chaperone 1 (276 aa).

The protein belongs to the PSMG1 family. As to quaternary structure, component of the 20S proteasome chaperone. Forms a heterodimer with ADD66 that binds to proteasome precursors.

The protein resides in the cytoplasm. Involved in 20S proteasome assembly. The polypeptide is Proteasome chaperone 1 (PBA1) (Saccharomyces cerevisiae (strain ATCC 204508 / S288c) (Baker's yeast)).